We begin with the raw amino-acid sequence, 74 residues long: RNA-binding protein Hfq (74 aa).

Residues 9-69 form the Sm domain; that stretch reads DQFLNQLRKE…ISTFMPQKNV (61 aa).

It belongs to the Hfq family. As to quaternary structure, homohexamer.

In terms of biological role, RNA chaperone that binds small regulatory RNA (sRNAs) and mRNAs to facilitate mRNA translational regulation in response to envelope stress, environmental stress and changes in metabolite concentrations. Also binds with high specificity to tRNAs. The protein is RNA-binding protein Hfq of Bacillus cytotoxicus (strain DSM 22905 / CIP 110041 / 391-98 / NVH 391-98).